We begin with the raw amino-acid sequence, 190 residues long: dCTP deaminase, dUMP-forming (190 aa).

Residues 101-106, aspartate 119, 127-129, glutamine 148, tyrosine 162, and glutamine 174 contribute to the dCTP site; these read KSSLGR and TLE. Glutamate 129 serves as the catalytic Proton donor/acceptor. The interval 161–190 is disordered; it reads PYGSSGVGSKYQGQRGPTPSRSYQNFIRST. Residues 171-190 are compositionally biased toward polar residues; it reads YQGQRGPTPSRSYQNFIRST.

This sequence belongs to the dCTP deaminase family. Homotrimer.

The enzyme catalyses dCTP + 2 H2O = dUMP + NH4(+) + diphosphate. It functions in the pathway pyrimidine metabolism; dUMP biosynthesis; dUMP from dCTP: step 1/1. Functionally, bifunctional enzyme that catalyzes both the deamination of dCTP to dUTP and the hydrolysis of dUTP to dUMP without releasing the toxic dUTP intermediate. The protein is dCTP deaminase, dUMP-forming of Mycobacterium marinum (strain ATCC BAA-535 / M).